Consider the following 446-residue polypeptide: Phosphoglucosamine mutase (446 aa).

Catalysis depends on serine 103, which acts as the Phosphoserine intermediate. Mg(2+) is bound by residues serine 103, aspartate 242, aspartate 244, and aspartate 246. Serine 103 is subject to Phosphoserine.

This sequence belongs to the phosphohexose mutase family. Mg(2+) serves as cofactor. Activated by phosphorylation.

The catalysed reaction is alpha-D-glucosamine 1-phosphate = D-glucosamine 6-phosphate. Functionally, catalyzes the conversion of glucosamine-6-phosphate to glucosamine-1-phosphate. This chain is Phosphoglucosamine mutase, found in Vibrio vulnificus (strain YJ016).